We begin with the raw amino-acid sequence, 186 residues long: Adrenodoxin, mitochondrial (186 aa).

The N-terminal 58 residues, 1 to 58, are a transit peptide targeting the mitochondrion; sequence MAARLLRVASAALGDTAGRWRLLARPRAGAGGLRGSRGPGLGGGAVATRTLSVSGRAQ. Ser61 is modified (phosphoserine). Lys64 is subject to N6-acetyllysine; alternate. An N6-succinyllysine; alternate modification is found at Lys64. The 2Fe-2S ferredoxin-type domain maps to 65–169; that stretch reads ITVHFINRDG…NMTVRVPDAV (105 aa). [2Fe-2S] cluster is bound by residues Cys104, Cys110, Cys113, and Cys150. Position 156 is an N6-succinyllysine (Lys156). Residue Ser175 is modified to Phosphoserine.

It belongs to the adrenodoxin/putidaredoxin family. In terms of assembly, interacts with CYP11A1. The cofactor is [2Fe-2S] cluster. In terms of tissue distribution, detected in adrenal cortex and corpus luteum (at protein level).

The protein localises to the mitochondrion matrix. Functionally, essential for the synthesis of various steroid hormones. Participates in the reduction of mitochondrial cytochrome P450 for steroidogenesis. Transfers electrons from adrenodoxin reductase to CYP11A1, a cytochrome P450 that catalyzes cholesterol side-chain cleavage to produce pregnenolone, the precursor of most steroid hormones. Does not form a ternary complex with adrenodoxin reductase and CYP11A1 but shuttles between the two enzymes to transfer electrons. The sequence is that of Adrenodoxin, mitochondrial (FDX1) from Bos taurus (Bovine).